We begin with the raw amino-acid sequence, 273 residues long: Thiazole synthase (273 aa).

Lysine 110 functions as the Schiff-base intermediate with DXP in the catalytic mechanism. Residues glycine 171, 198-199, and 220-221 contribute to the 1-deoxy-D-xylulose 5-phosphate site; these read AG and NS.

Belongs to the ThiG family. As to quaternary structure, homotetramer. Forms heterodimers with either ThiH or ThiS.

Its subcellular location is the cytoplasm. It catalyses the reaction [ThiS sulfur-carrier protein]-C-terminal-Gly-aminoethanethioate + 2-iminoacetate + 1-deoxy-D-xylulose 5-phosphate = [ThiS sulfur-carrier protein]-C-terminal Gly-Gly + 2-[(2R,5Z)-2-carboxy-4-methylthiazol-5(2H)-ylidene]ethyl phosphate + 2 H2O + H(+). It participates in cofactor biosynthesis; thiamine diphosphate biosynthesis. In terms of biological role, catalyzes the rearrangement of 1-deoxy-D-xylulose 5-phosphate (DXP) to produce the thiazole phosphate moiety of thiamine. Sulfur is provided by the thiocarboxylate moiety of the carrier protein ThiS. In vitro, sulfur can be provided by H(2)S. This is Thiazole synthase from Hydrogenovibrio crunogenus (strain DSM 25203 / XCL-2) (Thiomicrospira crunogena).